The primary structure comprises 353 residues: MSKSRELIIAPKGSQAQLSKLLPQLEDEGIKMIYLDPKKLGKKKTKLQTVYPSNNANYVVLEKENATKPKGKKVGRKFEVLSNTDIENILTIAKKGLDFVVVEVKDWKIIPLENIIAKLHKIHTKIFAVARTPEEVRKMFSILEVGVDGVIFNTSSINEVREAMVYLGTRSFDMKPAKIIDIKEVGDGERVCVDTASMLHKGEGMLIGSRSNFLFLVHNESVGSSFTSPRPFRVNAGAVHCYTLSPDGTTNYLSEVETGSEVLILNSKGKARRATVGRSKIERRPMLMIKAKAGGEIGGIIAQDAETIRFVKPNGQLVSVTHLKKGDTVMVHSKPATGRHFGMEVSDEYILEK.

Belongs to the archaeal-type DHQ synthase family.

The catalysed reaction is 2-amino-2,3,7-trideoxy-D-lyxo-hept-6-ulosonate + NAD(+) + H2O = 3-dehydroquinate + NH4(+) + NADH + H(+). In terms of biological role, catalyzes the oxidative deamination and cyclization of 2-amino-3,7-dideoxy-D-threo-hept-6-ulosonic acid (ADH) to yield 3-dehydroquinate (DHQ), which is fed into the canonical shikimic pathway of aromatic amino acid biosynthesis. This is 3-dehydroquinate synthase from Nitrosopumilus maritimus (strain SCM1).